Here is a 340-residue protein sequence, read N- to C-terminus: Phosphoribosylformylglycinamidine cyclo-ligase (340 aa).

It belongs to the AIR synthase family.

The protein resides in the cytoplasm. It carries out the reaction 2-formamido-N(1)-(5-O-phospho-beta-D-ribosyl)acetamidine + ATP = 5-amino-1-(5-phospho-beta-D-ribosyl)imidazole + ADP + phosphate + H(+). It functions in the pathway purine metabolism; IMP biosynthesis via de novo pathway; 5-amino-1-(5-phospho-D-ribosyl)imidazole from N(2)-formyl-N(1)-(5-phospho-D-ribosyl)glycinamide: step 2/2. This is Phosphoribosylformylglycinamidine cyclo-ligase from Streptococcus pyogenes serotype M2 (strain MGAS10270).